We begin with the raw amino-acid sequence, 198 residues long: Holliday junction branch migration complex subunit RuvA (198 aa).

A domain I region spans residues 1–63 (MYDYIKGQLT…EDAQLLFGFH (63 aa)). The tract at residues 64–142 (SEEEKDVFLK…EAPKEESSKP (79 aa)) is domain II. The interval 143-147 (PKAKQ) is flexible linker. The segment at 148–198 (QGNEQLDEAVEALLALGYKATELKKIRAFFEGTSETAEQYIKSALKMLMKG) is domain III.

It belongs to the RuvA family. As to quaternary structure, homotetramer. Forms an RuvA(8)-RuvB(12)-Holliday junction (HJ) complex. HJ DNA is sandwiched between 2 RuvA tetramers; dsDNA enters through RuvA and exits via RuvB. An RuvB hexamer assembles on each DNA strand where it exits the tetramer. Each RuvB hexamer is contacted by two RuvA subunits (via domain III) on 2 adjacent RuvB subunits; this complex drives branch migration. In the full resolvosome a probable DNA-RuvA(4)-RuvB(12)-RuvC(2) complex forms which resolves the HJ.

The protein resides in the cytoplasm. The RuvA-RuvB-RuvC complex processes Holliday junction (HJ) DNA during genetic recombination and DNA repair, while the RuvA-RuvB complex plays an important role in the rescue of blocked DNA replication forks via replication fork reversal (RFR). RuvA specifically binds to HJ cruciform DNA, conferring on it an open structure. The RuvB hexamer acts as an ATP-dependent pump, pulling dsDNA into and through the RuvAB complex. HJ branch migration allows RuvC to scan DNA until it finds its consensus sequence, where it cleaves and resolves the cruciform DNA. The polypeptide is Holliday junction branch migration complex subunit RuvA (Streptococcus equi subsp. zooepidemicus (strain H70)).